A 232-amino-acid polypeptide reads, in one-letter code: Large ribosomal subunit protein uL1 (232 aa).

This sequence belongs to the universal ribosomal protein uL1 family. In terms of assembly, part of the 50S ribosomal subunit.

Functionally, binds directly to 23S rRNA. The L1 stalk is quite mobile in the ribosome, and is involved in E site tRNA release. Protein L1 is also a translational repressor protein, it controls the translation of the L11 operon by binding to its mRNA. The sequence is that of Large ribosomal subunit protein uL1 from Chlamydia trachomatis serovar D (strain ATCC VR-885 / DSM 19411 / UW-3/Cx).